A 522-amino-acid polypeptide reads, in one-letter code: MEELQGYFEKDRSRQQPFLYPLLFQEYIYALAHDRGLNRNGSIFYEPLEVFGYDSKSSLALVKRLITRIYQQHFFLSSVNDSNQNRFVGHHHTNFFYSRFYSQMISEGFAIIVEIPFSLQLVSPLKEKEIPKSHNLRSIHFNFPFLEDQLLHFNYVSDILIPHPIHMEILVQILQCWIQDVPLLHFLRFFLHEYHNWHSFFITQNKSIYLFSKETKRLFRFLYNSYVSECEFVFVFLRKHSSYLRFTSFRTFLERRYFYGKMEHLQTEHLIIVCCDYFNRTLWSFKDPFMHYARCQGKAILVSKGTHLLMKKWKYNFVNLWQYYFHFWYQSYRIHINQLSNHSFYFLGYLSSLLKNSSTVRNQMLDNSFLIDTLTTKFDTAVPVIFLIVSLSKAQFCTVSGHPISKPIWTDLSDSGIIERFGRICRNLSHYHSGSSKKQGLYRIKYILRLSCARTLARKHKSTVRTFMQRLGSRLLEEFFTEGEQDLSLILPKAIPFPFSGSHRERIWYLDIIRINDLVNRS.

Belongs to the intron maturase 2 family. MatK subfamily.

Its subcellular location is the plastid. It is found in the chloroplast. Its function is as follows. Usually encoded in the trnK tRNA gene intron. Probably assists in splicing its own and other chloroplast group II introns. This is Maturase K from Schizorhiza neglecta (Lapeirousia neglecta).